The sequence spans 322 residues: Transaldolase (322 aa).

Lys-136 (schiff-base intermediate with substrate) is an active-site residue.

It belongs to the transaldolase family. Type 1 subfamily. As to quaternary structure, homodimer.

Its subcellular location is the cytoplasm. The enzyme catalyses D-sedoheptulose 7-phosphate + D-glyceraldehyde 3-phosphate = D-erythrose 4-phosphate + beta-D-fructose 6-phosphate. The protein operates within carbohydrate degradation; pentose phosphate pathway; D-glyceraldehyde 3-phosphate and beta-D-fructose 6-phosphate from D-ribose 5-phosphate and D-xylulose 5-phosphate (non-oxidative stage): step 2/3. Its function is as follows. Transaldolase is important for the balance of metabolites in the pentose-phosphate pathway. This chain is Transaldolase, found in Xanthomonas oryzae pv. oryzae (strain KACC10331 / KXO85).